We begin with the raw amino-acid sequence, 126 residues long: Large ribosomal subunit protein bL12 (126 aa).

The segment covering 104-116 has biased composition (basic and acidic residues); sequence AKKEDAEKAKAQL. The tract at residues 104–126 is disordered; sequence AKKEDAEKAKAQLEEAGATVELK. Positions 117–126 are enriched in low complexity; it reads EEAGATVELK.

The protein belongs to the bacterial ribosomal protein bL12 family. As to quaternary structure, homodimer. Part of the ribosomal stalk of the 50S ribosomal subunit. Forms a multimeric L10(L12)X complex, where L10 forms an elongated spine to which 2 to 4 L12 dimers bind in a sequential fashion. Binds GTP-bound translation factors.

Functionally, forms part of the ribosomal stalk which helps the ribosome interact with GTP-bound translation factors. Is thus essential for accurate translation. In Bifidobacterium animalis subsp. lactis (strain AD011), this protein is Large ribosomal subunit protein bL12.